We begin with the raw amino-acid sequence, 264 residues long: Undecaprenyl-diphosphatase (264 aa).

8 consecutive transmembrane segments (helical) span residues 1-21 (MDLI…FLPI), 39-59 (QGLA…AVYF), 87-107 (WYLI…DDLI), 111-131 (LRST…LWVA), 144-164 (IALS…IPGT), 187-207 (FSFL…GLQL), 208-228 (VLSA…LSAV), and 244-264 (IGML…FIAV).

It belongs to the UppP family.

It localises to the cell inner membrane. It catalyses the reaction di-trans,octa-cis-undecaprenyl diphosphate + H2O = di-trans,octa-cis-undecaprenyl phosphate + phosphate + H(+). Functionally, catalyzes the dephosphorylation of undecaprenyl diphosphate (UPP). Confers resistance to bacitracin. The protein is Undecaprenyl-diphosphatase of Teredinibacter turnerae (strain ATCC 39867 / T7901).